The primary structure comprises 416 residues: Creatine kinase U-type, mitochondrial (416 aa).

A mitochondrion-targeting transit peptide spans 1–39; the sequence is MAGPFSRLLSARPGLRLLALAGAGSLAAGFLLRPEPIRA. Positions 40–63 are cardiolipin-binding; that stretch reads ASERRRQYPPSAEYPDLRKHNNCM. Residues 44 to 131 form the Phosphagen kinase N-terminal domain; sequence RRQYPPSAEY…FDPVIQERHN (88 aa). Ser-151 carries the phosphoserine modification. Positions 158 to 400 constitute a Phosphagen kinase C-terminal domain; the sequence is YVLSSRVRTG…NYLIDCERRL (243 aa). Residue 161 to 165 coordinates ATP; that stretch reads SSRVR. Ser-196 carries the post-translational modification Phosphoserine. Residue Thr-213 is modified to Phosphothreonine. His-224 contacts ATP. The residue at position 232 (Ser-232) is a Phosphoserine. ATP contacts are provided by residues Arg-269, Arg-325, and 353–358; that span reads RGTGGV. Thr-355 bears the Phosphothreonine mark. Phosphoserine is present on Ser-365. Asp-368 is a binding site for ATP.

This sequence belongs to the ATP:guanido phosphotransferase family. In terms of assembly, exists as an octamer composed of four MTCK homodimers.

It is found in the mitochondrion inner membrane. The catalysed reaction is creatine + ATP = N-phosphocreatine + ADP + H(+). Functionally, reversibly catalyzes the transfer of phosphate between ATP and various phosphogens (e.g. creatine phosphate). Creatine kinase isoenzymes play a central role in energy transduction in tissues with large, fluctuating energy demands, such as skeletal muscle, heart, brain and spermatozoa. The sequence is that of Creatine kinase U-type, mitochondrial (CKMT1) from Sus scrofa (Pig).